The following is a 132-amino-acid chain: Small ribosomal subunit protein uS8 (132 aa).

The protein belongs to the universal ribosomal protein uS8 family. In terms of assembly, part of the 30S ribosomal subunit. Contacts proteins S5 and S12.

Its function is as follows. One of the primary rRNA binding proteins, it binds directly to 16S rRNA central domain where it helps coordinate assembly of the platform of the 30S subunit. The sequence is that of Small ribosomal subunit protein uS8 from Mycobacterium avium (strain 104).